Reading from the N-terminus, the 103-residue chain is Large ribosomal subunit protein bL21 (103 aa).

Belongs to the bacterial ribosomal protein bL21 family. In terms of assembly, part of the 50S ribosomal subunit. Contacts protein L20.

In terms of biological role, this protein binds to 23S rRNA in the presence of protein L20. This Bordetella parapertussis (strain 12822 / ATCC BAA-587 / NCTC 13253) protein is Large ribosomal subunit protein bL21.